The primary structure comprises 490 residues: MSDRGRTLMVQGTTSDAGKSTLVTALCRWLARRGVAVVPFKPQNMALNSAVTADGGEIGRAQAVQAQACRLAPHTDMNPVLLKPNTDIGAQVIIHGRAVTSMDAAAYHDYKRVAMEAVLASHGRLAAAYRVVMVEGAGSPAEINLRANDIANMGFAEAVDCPVILVADIDRGGVFAHLVGTLELLSDSERERVKGFVINRFRGDIALLQPGLDWLEARTGKPVLGVLPYVSDLHLEAEDAIDTRQAAKVGPRLKVVVPVLPRISNHTDFDPLRLHPQVELSFVGPGQALPSADLIVLPGSKSVRADLAALRERGWDEAILRHLRYGGRLLGICGGLQMLGERLHDPLGLEGAAGSSAGLGLLALETTLEADKQLRNVQGRLSLEDAPLSGYEIHAGVTRGEALARPAVVLDDGRADGARSVDGNVMGTYLHGLFESTAACSALLRWAGLREVQAVDYQALRERDIERLADLVERHLDTGRLLALCGEPHA.

Residues 252 to 439 (RLKVVVPVLP…LHGLFESTAA (188 aa)) form the GATase cobBQ-type domain. Catalysis depends on cysteine 333, which acts as the Nucleophile. Histidine 431 is an active-site residue.

This sequence belongs to the CobB/CobQ family. CobQ subfamily.

Its pathway is cofactor biosynthesis; adenosylcobalamin biosynthesis. In terms of biological role, catalyzes amidations at positions B, D, E, and G on adenosylcobyrinic A,C-diamide. NH(2) groups are provided by glutamine, and one molecule of ATP is hydrogenolyzed for each amidation. This is Cobyric acid synthase from Pseudomonas aeruginosa (strain ATCC 15692 / DSM 22644 / CIP 104116 / JCM 14847 / LMG 12228 / 1C / PRS 101 / PAO1).